A 454-amino-acid chain; its full sequence is MNHSDTIVAQATPPGRGGVGILRVSGSKAAEVAQLLLGKLPKPRYADYLPFRDADGSTLDQGIALWFPGPNSFTGEDVLEFQGHGGPVILDLLLKRILSLPGLRIANPGEFSERAFLNDKLDLAQAEAIADLIDASSEQAARSAVNSLQGVFSTRVNHLVEALTHLRIYVEAAIDFPDEEIDFLSDGKIEAQLHQVIHNLAEVRSEARQGSLLREGMKVVIAGRPNAGKSSLLNALAGREAAIVTDIAGTTRDVLREHIHIDGMPLHIIDTAGLREASDEVERIGIERAWHEIEQADHVLFMVDGTTTEATNPAEIWPDFIARLPESLPVTVVRNKADITGETRGVEEVNGHSLIRLSARTGEGIENLRDHLKSSMGFSGNMEGGFLARRRHLQALELAATHLEQGKHQLLAAWAGELLAEELRLAQQALSEITGEFSSDDLLGRIFSSFCIGK.

(6S)-5-formyl-5,6,7,8-tetrahydrofolate is bound by residues R23, E80, and K120. One can recognise a TrmE-type G domain in the interval 216-377 (GMKVVIAGRP…LRDHLKSSMG (162 aa)). N226 is a binding site for K(+). GTP contacts are provided by residues 226-231 (NAGKSS), 245-251 (TDIAGTT), 270-273 (DTAG), 335-338 (NKAD), and 358-360 (SAR). S230 serves as a coordination point for Mg(2+). K(+) contacts are provided by T245, I247, and T250. T251 provides a ligand contact to Mg(2+). K454 contributes to the (6S)-5-formyl-5,6,7,8-tetrahydrofolate binding site.

It belongs to the TRAFAC class TrmE-Era-EngA-EngB-Septin-like GTPase superfamily. TrmE GTPase family. Homodimer. Heterotetramer of two MnmE and two MnmG subunits. K(+) serves as cofactor.

It localises to the cytoplasm. Its function is as follows. Exhibits a very high intrinsic GTPase hydrolysis rate. Involved in the addition of a carboxymethylaminomethyl (cmnm) group at the wobble position (U34) of certain tRNAs, forming tRNA-cmnm(5)s(2)U34. The sequence is that of tRNA modification GTPase MnmE from Erwinia tasmaniensis (strain DSM 17950 / CFBP 7177 / CIP 109463 / NCPPB 4357 / Et1/99).